A 348-amino-acid chain; its full sequence is UDP-3-O-acylglucosamine N-acyltransferase (348 aa).

Residue histidine 243 is the Proton acceptor of the active site.

This sequence belongs to the transferase hexapeptide repeat family. LpxD subfamily. Homotrimer.

The catalysed reaction is a UDP-3-O-[(3R)-3-hydroxyacyl]-alpha-D-glucosamine + a (3R)-hydroxyacyl-[ACP] = a UDP-2-N,3-O-bis[(3R)-3-hydroxyacyl]-alpha-D-glucosamine + holo-[ACP] + H(+). The protein operates within bacterial outer membrane biogenesis; LPS lipid A biosynthesis. Its function is as follows. Catalyzes the N-acylation of UDP-3-O-acylglucosamine using 3-hydroxyacyl-ACP as the acyl donor. Is involved in the biosynthesis of lipid A, a phosphorylated glycolipid that anchors the lipopolysaccharide to the outer membrane of the cell. The chain is UDP-3-O-acylglucosamine N-acyltransferase from Hahella chejuensis (strain KCTC 2396).